A 423-amino-acid polypeptide reads, in one-letter code: Serine--tRNA ligase (423 aa).

231–233 (TGE) is an L-serine binding site. 262 to 264 (RSE) is an ATP binding site. An L-serine-binding site is contributed by Glu-285. 349 to 352 (EISS) is an ATP binding site. Residue Ser-385 participates in L-serine binding.

Belongs to the class-II aminoacyl-tRNA synthetase family. Type-1 seryl-tRNA synthetase subfamily. In terms of assembly, homodimer. The tRNA molecule binds across the dimer.

Its subcellular location is the cytoplasm. The catalysed reaction is tRNA(Ser) + L-serine + ATP = L-seryl-tRNA(Ser) + AMP + diphosphate + H(+). The enzyme catalyses tRNA(Sec) + L-serine + ATP = L-seryl-tRNA(Sec) + AMP + diphosphate + H(+). It participates in aminoacyl-tRNA biosynthesis; selenocysteinyl-tRNA(Sec) biosynthesis; L-seryl-tRNA(Sec) from L-serine and tRNA(Sec): step 1/1. Its function is as follows. Catalyzes the attachment of serine to tRNA(Ser). Is also able to aminoacylate tRNA(Sec) with serine, to form the misacylated tRNA L-seryl-tRNA(Sec), which will be further converted into selenocysteinyl-tRNA(Sec). The chain is Serine--tRNA ligase from Coxiella burnetii (strain RSA 331 / Henzerling II).